The chain runs to 209 residues: Large ribosomal subunit protein uL3 (209 aa).

The residue at position 150 (Q150) is an N5-methylglutamine.

Belongs to the universal ribosomal protein uL3 family. Part of the 50S ribosomal subunit. Forms a cluster with proteins L14 and L19. Post-translationally, methylated by PrmB.

In terms of biological role, one of the primary rRNA binding proteins, it binds directly near the 3'-end of the 23S rRNA, where it nucleates assembly of the 50S subunit. The chain is Large ribosomal subunit protein uL3 from Proteus mirabilis (strain HI4320).